Here is a 293-residue protein sequence, read N- to C-terminus: Pyridoxal 5'-phosphate synthase subunit PdxS (293 aa).

Aspartate 23 lines the D-ribose 5-phosphate pocket. The active-site Schiff-base intermediate with D-ribose 5-phosphate is the lysine 80. Residue glycine 152 participates in D-ribose 5-phosphate binding. Arginine 164 provides a ligand contact to D-glyceraldehyde 3-phosphate. D-ribose 5-phosphate is bound by residues glycine 213 and 234–235; that span reads GS.

It belongs to the PdxS/SNZ family. As to quaternary structure, in the presence of PdxT, forms a dodecamer of heterodimers.

It catalyses the reaction aldehydo-D-ribose 5-phosphate + D-glyceraldehyde 3-phosphate + L-glutamine = pyridoxal 5'-phosphate + L-glutamate + phosphate + 3 H2O + H(+). It participates in cofactor biosynthesis; pyridoxal 5'-phosphate biosynthesis. In terms of biological role, catalyzes the formation of pyridoxal 5'-phosphate from ribose 5-phosphate (RBP), glyceraldehyde 3-phosphate (G3P) and ammonia. The ammonia is provided by the PdxT subunit. Can also use ribulose 5-phosphate and dihydroxyacetone phosphate as substrates, resulting from enzyme-catalyzed isomerization of RBP and G3P, respectively. The polypeptide is Pyridoxal 5'-phosphate synthase subunit PdxS (Desulfovibrio desulfuricans (strain ATCC 27774 / DSM 6949 / MB)).